A 312-amino-acid polypeptide reads, in one-letter code: Malate dehydrogenase (312 aa).

NAD(+)-binding positions include 7–13 (GAAGGIG) and D34. Residues R81 and R87 each contribute to the substrate site. NAD(+) contacts are provided by residues N94 and 117–119 (ITN). Positions 119 and 153 each coordinate substrate. H177 (proton acceptor) is an active-site residue. M227 lines the NAD(+) pocket.

The protein belongs to the LDH/MDH superfamily. MDH type 1 family. Homodimer.

The catalysed reaction is (S)-malate + NAD(+) = oxaloacetate + NADH + H(+). Its function is as follows. Catalyzes the reversible oxidation of malate to oxaloacetate. The sequence is that of Malate dehydrogenase from Moritella marina (Vibrio marinus).